A 448-amino-acid polypeptide reads, in one-letter code: Vitamin D3 receptor (448 aa).

Residues 41 to 116 (PRICGVCGDR…IGMMKEFILT (76 aa)) constitute a DNA-binding region (nuclear receptor). 8 residues coordinate Zn(2+): C44, C47, C61, C64, C80, C86, C96, and C99. 2 consecutive NR C4-type zinc fingers follow at residues 44–64 (CGVCGDRATGFHFNAMTCEGC) and 80–104 (CPFSGDCKITKDNRRHCQACRLKRC). Positions 117–146 (DEEVQRKREMILKRKEEEALKESLKPKLSE) are hinge. The NR LBD domain maps to 147–444 (EQQKVINILL…LTPLVLEVFG (298 aa)). S258 serves as a coordination point for calcitriol. An interaction with coactivator LXXLL motif region spans residues 267–285 (KMIPGFRDLTAEDQIALLK). Calcitriol contacts are provided by R295, S299, H326, and H418. Residues 437–445 (PLVLEVFGN) carry the 9aaTAD motif.

This sequence belongs to the nuclear hormone receptor family. NR1 subfamily. As to quaternary structure, homodimer in the absence of bound vitamin D3. Heterodimer with RXRA after vitamin D3 binding.

It localises to the nucleus. The protein localises to the cytoplasm. Functionally, nuclear receptor for calcitriol, the active form of vitamin D3 which mediates the action of this vitamin on cells. Enters the nucleus upon vitamin D3 binding where it forms heterodimers with the retinoid X receptor/RXR. The VDR-RXR heterodimers bind to specific response elements on DNA and activate the transcription of vitamin D3-responsive target genes. Plays a central role in calcium homeostasis. Also functions as a receptor for the secondary bile acid lithocholic acid (LCA) and its metabolites. The sequence is that of Vitamin D3 receptor (VDR) from Coturnix japonica (Japanese quail).